The sequence spans 443 residues: Mimosinase, chloroplastic (443 aa).

A chloroplast-targeting transit peptide spans 1–43 (MALSSTFLNPLVSSVAVNPQPKITSGKGFRVNCLIRTQQTVIK). Tyrosine 105, arginine 107, glycine 135, methionine 136, serine 254, and threonine 256 together coordinate pyridoxal 5'-phosphate. Lysine 257 is modified (N6-(pyridoxal phosphate)lysine).

It belongs to the trans-sulfuration enzymes family. As to quaternary structure, forms homodimers. May form homotetramers from two homodimers. Pyridoxal 5'-phosphate serves as cofactor.

The protein resides in the plastid. It localises to the chloroplast. The catalysed reaction is L-mimosine + H2O = 3-hydroxy-4H-pyrid-4-one + pyruvate + NH4(+). Its function is as follows. Catalyzes the degradation of mimosine, which is a toxic secondary metabolite found in all Leucaena and Mimosa species. In Leucaena leucocephala (White popinac), this protein is Mimosinase, chloroplastic.